Here is a 218-residue protein sequence, read N- to C-terminus: Thiopurine S-methyltransferase (218 aa).

The S-adenosyl-L-methionine site is built by tryptophan 10, leucine 45, glutamate 66, and arginine 123.

The protein belongs to the class I-like SAM-binding methyltransferase superfamily. TPMT family.

The protein localises to the cytoplasm. It carries out the reaction S-adenosyl-L-methionine + a thiopurine = S-adenosyl-L-homocysteine + a thiopurine S-methylether.. This chain is Thiopurine S-methyltransferase, found in Shewanella sp. (strain W3-18-1).